Here is a 269-residue protein sequence, read N- to C-terminus: Thyroxine 5-deiodinase (269 aa).

The Cytoplasmic segment spans residues 1 to 14 (MLPAPHTCCRLLQQ). The chain crosses the membrane as a helical; Signal-anchor for type II membrane protein span at residues 15–35 (LLACCLLLPRFLLTVLLLWLL). Over 36 to 269 (DFPCVRRRVI…TGNGALVIQV (234 aa)) the chain is Extracellular. The active site involves Sec-133. Residue Sec-133 is a non-standard amino acid, selenocysteine.

Belongs to the iodothyronine deiodinase family. Monomer. Homodimer. May undergo minor heretodimerization with DIO1 and DIO2.

Its subcellular location is the cell membrane. It is found in the endosome membrane. The catalysed reaction is 3,3',5'-triiodo-L-thyronine + iodide + A + H(+) = L-thyroxine + AH2. It catalyses the reaction 3,3'-diiodo-L-thyronine + iodide + A + H(+) = 3,3',5-triiodo-L-thyronine + AH2. It carries out the reaction 3-iodo-L-thyronine + iodide + A + H(+) = 3,5-diiodo-L-thyronine + AH2. The enzyme catalyses L-thyronine + iodide + A + H(+) = 3-iodo-L-thyronine + AH2. The catalysed reaction is 3',5'-diiodo-L-thyronine + iodide + A + H(+) = 3,3',5'-triiodo-L-thyronine + AH2. It catalyses the reaction 3'-iodo-L-thyronine + iodide + A + H(+) = 3,3'-diiodo-L-thyronine + AH2. It carries out the reaction 3,3',5'-triiodothyronamine + iodide + A + H(+) = 3,3',5,5'-tetraiodothyronamine + AH2. The enzyme catalyses 3',5'-diiodothyronamine + iodide + A + H(+) = 3,3',5'-triiodothyronamine + AH2. The catalysed reaction is 3,3'-diiodothyronamine + iodide + A + H(+) = 3,3',5-triiodothyronamine + AH2. It catalyses the reaction 3-iodothyronamine + iodide + A + H(+) = 3,5-diiodothyronamine + AH2. It carries out the reaction 3'-iodothyronamine + iodide + A + H(+) = 3,3'-diiodothyronamine + AH2. The enzyme catalyses thyronamine + iodide + A + H(+) = 3-iodothyronamine + AH2. In terms of biological role, plays a crucial role in the metabolism of thyroid hormones (TH) and has specific roles in TH activation and inactivation by deiodination. Catalyzes the deiodination of L-thyroxine (T4) to 3,3',5'-triiodothyronine (rT3), 3,5-diiodothyronine (3,5-T2) to 3-monoiodothyronine (3-T1), rT3 to 3',5'-diiodothyronine (3',5'-T2) and 3,3'-diiodothyronine (3,3'-T2) to 3'-monoiodothyronine (3'-T1) via inner-ring deiodination (IRD). Catalyzes the deiodination of 3,5,3'-triiodothyronine (T3) to 3,3'-diiodothyronine (3,3'-T2) via IRD. Catalyzes the deiodination of 3-T1 to L-thyronine (T0) via outer-ring deiodination (ORD). Catalyzes the tyrosyl ring deiodinations of 3,3',5,5'-tetraiodothyronamine, 3,3',5'-triiodothyronamine, 3,5,3'-triiodothyronamine, 3,5-diiodothyronamine, 3,3'-diiodothyronamine and 3-iodothyronamine. The protein is Thyroxine 5-deiodinase (dio3) of Aquarana catesbeiana (American bullfrog).